A 355-amino-acid polypeptide reads, in one-letter code: MIASADLDACREMIRTGSYSFHAASRLLPERVRAPSLALYAFCRVADDAVDEAVNDGQREEDAEVKRRAVLSLRDRLDLVYGGRPRNAPADRAFAAVVEEFEMPRALPEALLEGLAWDAVGRSYDSFSGVLDYSARVAAAVGAMMCVLMRVRDPDVLARACDLGLAMQLTNIARDVGTDARSGRIYLPRDWMEEEGLPVEEFLARPVVDDRIRAVTHRLLRAADRLYLRSEAGVCGLPLACRPGIYAARHIYAGIGDEIARNGYDSVTRRAFTTRRQKLVWLGLSATRAALSPFGPGCATLHAAPEPEVAFLVNAAARARPQRGRSEALISVLAQLEAQDRQISRQRLGNRANPI.

It belongs to the phytoene/squalene synthase family. The cofactor is ATP. Requires Mn(2+) as cofactor. Mg(2+) is required as a cofactor.

The protein operates within carotenoid biosynthesis; phytoene biosynthesis. Involved in the biosynthesis of carotenoids. Catalyzes the condensation of two molecules of geranylgeranyl diphosphate (GGPP) to give prephytoene diphosphate (PPPP) and the subsequent rearrangement of the cyclopropylcarbinyl intermediate to yield phytoene. The sequence is that of Phytoene synthase (crtB) from Cereibacter sphaeroides (strain ATCC 17023 / DSM 158 / JCM 6121 / CCUG 31486 / LMG 2827 / NBRC 12203 / NCIMB 8253 / ATH 2.4.1.) (Rhodobacter sphaeroides).